We begin with the raw amino-acid sequence, 215 residues long: Secretory component protein psh3 (215 aa).

Topologically, residues 1–21 are cytoplasmic; that stretch reads MAKRSIFRFADEKGLKVAARY. The chain crosses the membrane as a helical span at residues 22–42; the sequence is GVLMSTSFIFALLFHSSVADV. Over 43–67 the chain is Extracellular; sequence NTLWSPGPESAFDAAETYYTLVAGS. A helical transmembrane segment spans residues 68–88; that stretch reads HFIVKYTVYTIMGLNMIFHLI. The Cytoplasmic segment spans residues 89-105; the sequence is QATGAKGDDKLFFYSST. The chain crosses the membrane as a helical span at residues 106 to 126; the sequence is LLYLTALILFIVNVAPSMLVV. Residues 127-147 are Extracellular-facing; that stretch reads KLQNYVQFPRNMHLSVLAASH. A helical transmembrane segment spans residues 148–168; the sequence is VLVEFLLAGVILIQLGYVFGY. Residues 169–215 lie on the Cytoplasmic side of the membrane; it reads HVQSIQQREYAEDMREQELAEKAKLESESATTQSVETVSTESVSKRK. Residues 190 to 215 form a disordered region; it reads KAKLESESATTQSVETVSTESVSKRK. The segment covering 196–215 has biased composition (low complexity); it reads ESATTQSVETVSTESVSKRK.

The protein to yeast SHR3. Monomer.

It is found in the endoplasmic reticulum membrane. Involved in amino acid permease processing and required for the efficient translocation of structurally related amino acid permeases from the endoplasmic reticulum to the plasma membrane. This chain is Secretory component protein psh3 (psh3), found in Schizosaccharomyces pombe (strain 972 / ATCC 24843) (Fission yeast).